A 670-amino-acid polypeptide reads, in one-letter code: Nitrate import ATP-binding protein NrtC (670 aa).

The ABC transporter domain occupies 5-239 (IEIDHVDRIF…RPRHRLEVVN (235 aa)). An ATP-binding site is contributed by 42 to 49 (GHSGCGKS). Positions 255–278 (NQQKRAKKVGAVSQFAEAMGGNGL) are linker. Residues 279 to 670 (EKINLDLGFI…LIDQIDQVNQ (392 aa)) are nrtA-like.

It belongs to the ABC transporter superfamily. Nitrate/nitrite/cyanate uptake transporter (NitT) (TC 3.A.1.16) family. As to quaternary structure, the complex is composed of two ATP-binding proteins (NrtC and NrtD), two transmembrane proteins (NrtB) and a solute-binding protein (NrtA).

The protein resides in the cell inner membrane. The enzyme catalyses nitrate(out) + ATP + H2O = nitrate(in) + ADP + phosphate + H(+). Part of the ABC transporter complex NrtABCD involved in nitrate uptake. The complex is probably also involved in nitrite transport. Probably responsible for energy coupling to the transport system. The sequence is that of Nitrate import ATP-binding protein NrtC (nrtC) from Synechocystis sp. (strain ATCC 27184 / PCC 6803 / Kazusa).